The sequence spans 134 residues: MKTIHVSVVTPDGPVYESEVEMVSTRAQSGELGILHGHIPMVAPLQIGAVRLKKASSTELVAVSGGFLEVRPDKVTILAQAAETAEEIDVARAEEAKKRAEMRLDSKQDDVDVKRAEIALKRAVNRLDISQRKF.

This sequence belongs to the ATPase epsilon chain family. As to quaternary structure, F-type ATPases have 2 components, CF(1) - the catalytic core - and CF(0) - the membrane proton channel. CF(1) has five subunits: alpha(3), beta(3), gamma(1), delta(1), epsilon(1). CF(0) has three main subunits: a, b and c.

Its subcellular location is the cell membrane. Functionally, produces ATP from ADP in the presence of a proton gradient across the membrane. This is ATP synthase epsilon chain (atpC) from Priestia megaterium (strain ATCC 12872 / QMB1551) (Bacillus megaterium).